The following is a 30-amino-acid chain: Varv peptide H (30 aa).

Positions 1–30 form a cross-link, cyclopeptide (Gly-Asn); that stretch reads GLPVCGETCFGGTCNTPGCSCETWPVCSRN. Intrachain disulfides connect Cys-5–Cys-19, Cys-9–Cys-21, and Cys-14–Cys-27.

Post-translationally, this is a cyclic peptide.

Probably participates in a plant defense mechanism. In Viola arvensis (European field pansy), this protein is Varv peptide H.